An 82-amino-acid polypeptide reads, in one-letter code: KTLLLTLVVVTIVCLDLGYTRRCFNQQSSEPQTNKSCPPGENSCYRKQWRDHRGTIIERGCGCPTVKPGVKLRCCESEDCNN.

Residues 1 to 20 form the signal peptide; sequence KTLLLTLVVVTIVCLDLGYT. Cystine bridges form between Cys-23/Cys-44, Cys-37/Cys-61, Cys-63/Cys-74, and Cys-75/Cys-80.

This sequence belongs to the three-finger toxin family. Short-chain subfamily. Type I alpha-neurotoxin sub-subfamily. As to expression, expressed by the venom gland.

It is found in the secreted. Binds to muscle nicotinic acetylcholine receptor (nAChR) and inhibit acetylcholine from binding to the receptor, thereby impairing neuromuscular transmission. In Laticauda laticaudata (Blue-ringed sea krait), this protein is Short neurotoxin OKI-10.